The following is a 316-amino-acid chain: protein SLOW GREEN 1, chloroplastic (316 aa).

The N-terminal 39 residues, 1–39 (MISSLSASSSLVSSFVAVKATPVTGPLIPRRDLLSIRIR), are a transit peptide targeting the chloroplast. TPR repeat units follow at residues 118–151 (VETL…QPEE), 152–185 (TEWK…NPLS), 226–259 (RDVR…DPKD), and 261–293 (RPYF…SPKK).

In terms of tissue distribution, ubiquitous. Preferentially expressed in newly formed green tissues.

The protein localises to the plastid. Its subcellular location is the chloroplast. In terms of biological role, required for the early stage of chloroplast development. May be involved in chloroplast protein biosynthesis and/or degradation. The chain is protein SLOW GREEN 1, chloroplastic from Arabidopsis thaliana (Mouse-ear cress).